The chain runs to 116 residues: CDKN2AIP N-terminal-like protein (116 aa).

N-acetylmethionine is present on methionine 1. The XRN2-binding (XTBD) domain maps to 24-116 (AEQFRSYSES…RSELMKKHQS (93 aa)).

This sequence belongs to the CARF family. In terms of assembly, interacts with XRN2; the interaction is direct.

In Bos taurus (Bovine), this protein is CDKN2AIP N-terminal-like protein (CDKN2AIPNL).